Here is a 274-residue protein sequence, read N- to C-terminus: Cytochrome b-c1 complex subunit Rieske, mitochondrial (274 aa).

The Mitochondrial matrix segment spans residues 79–103; the sequence is SHTDIKVPDFSDYRRSEVLDTTKSS. Residues 104-140 form a helical membrane-spanning segment; it reads RESSDARKGFSYLVTATTAVGVTYAAKSIVTQFVSSM. Topologically, residues 141-274 are mitochondrial intermembrane; it reads SASADVLAMS…FTSDDLVIVG (134 aa). The Rieske domain occupies 187-272; it reads EAAVELSQLR…YEFTSDDLVI (86 aa). [2Fe-2S] cluster contacts are provided by C217, H219, C236, H239, and S241. C222 and C238 form a disulfide bridge.

This sequence belongs to the Rieske iron-sulfur protein family. Component of the ubiquinol-cytochrome c oxidoreductase (cytochrome b-c1 complex, complex III, CIII), a multisubunit enzyme composed of 11 subunits. The complex is composed of 3 respiratory subunits cytochrome b, cytochrome c1 and Rieske protein UQCRFS1, 2 core protein subunits UQCRC1/QCR1 and UQCRC2/QCR2, and 6 low-molecular weight protein subunits UQCRH/QCR6, UQCRB/QCR7, UQCRQ/QCR8, UQCR10/QCR9, UQCR11/QCR10 and subunit 9, the cleavage product of Rieske protein UQCRFS1. The complex exists as an obligatory dimer and forms supercomplexes (SCs) in the inner mitochondrial membrane with NADH-ubiquinone oxidoreductase (complex I, CI) and cytochrome c oxidase (complex IV, CIV), resulting in different assemblies (supercomplex SCI(1)III(2)IV(1) and megacomplex MCI(2)III(2)IV(2)). Incorporation of the Rieske protein UQCRFS1 is the penultimate step in complex III assembly. Interacts with TTC19, which is involved in the clearance of UQCRFS1 fragments. In terms of assembly, component of the ubiquinol-cytochrome c oxidoreductase (cytochrome b-c1 complex, complex III, CIII). Subunit 9 corresponds to the mitochondrial targeting sequence (MTS) of Rieske protein UQCRFS1. It is retained after processing and incorporated inside complex III, where it remains bound to the complex and localizes between the 2 core subunits UQCRC1/QCR1 and UQCRC2/QCR2. The cofactor is [2Fe-2S] cluster. Proteolytic processing is necessary for the correct insertion of UQCRFS1 in the complex III dimer. Several fragments are generated during UQCRFS1 insertion, most probably due to the endogenous matrix-processing peptidase (MPP) activity of the 2 core protein subunits UQCRC1/QCR1 and UQCRC2/QCR2, which are homologous to the 2 mitochondrial-processing peptidase (MPP) subunits beta-MPP and alpha-MPP respectively. The action of the protease is also necessary for the clearance of the UQCRFS1 fragments.

Its subcellular location is the mitochondrion inner membrane. It catalyses the reaction a quinol + 2 Fe(III)-[cytochrome c](out) = a quinone + 2 Fe(II)-[cytochrome c](out) + 2 H(+)(out). In terms of biological role, component of the ubiquinol-cytochrome c oxidoreductase, a multisubunit transmembrane complex that is part of the mitochondrial electron transport chain which drives oxidative phosphorylation. The respiratory chain contains 3 multisubunit complexes succinate dehydrogenase (complex II, CII), ubiquinol-cytochrome c oxidoreductase (cytochrome b-c1 complex, complex III, CIII) and cytochrome c oxidase (complex IV, CIV), that cooperate to transfer electrons derived from NADH and succinate to molecular oxygen, creating an electrochemical gradient over the inner membrane that drives transmembrane transport and the ATP synthase. The cytochrome b-c1 complex catalyzes electron transfer from ubiquinol to cytochrome c, linking this redox reaction to translocation of protons across the mitochondrial inner membrane, with protons being carried across the membrane as hydrogens on the quinol. In the process called Q cycle, 2 protons are consumed from the matrix, 4 protons are released into the intermembrane space and 2 electrons are passed to cytochrome c. The Rieske protein is a catalytic core subunit containing a [2Fe-2S] iron-sulfur cluster. It cycles between 2 conformational states during catalysis to transfer electrons from the quinol bound in the Q(0) site in cytochrome b to cytochrome c1. Incorporation of UQCRFS1 is the penultimate step in complex III assembly. Functionally, component of the ubiquinol-cytochrome c oxidoreductase (cytochrome b-c1 complex, complex III, CIII). UQCRFS1 undergoes proteolytic processing once it is incorporated in the complex III dimer. One of the fragments, called subunit 9, corresponds to its mitochondrial targeting sequence (MTS). The proteolytic processing is necessary for the correct insertion of UQCRFS1 in the complex III dimer, but the persistence of UQCRFS1-derived fragments may prevent newly imported UQCRFS1 to be processed and assembled into complex III and is detrimental for the complex III structure and function. The sequence is that of Cytochrome b-c1 complex subunit Rieske, mitochondrial (UQCRFS1) from Aotus azarae (Azara's night monkey).